Here is a 346-residue protein sequence, read N- to C-terminus: Cysteinyl leukotriene receptor 2 (346 aa).

Over 1–42 (MERKFMSLQPSISVSEMEPNGTFSNNNSRNCTIENFKREFFP) the chain is Extracellular. Residues Asn-20, Asn-26, and Asn-30 are each glycosylated (N-linked (GlcNAc...) asparagine). The chain crosses the membrane as a helical span at residues 43–63 (IVYLIIFFWGVLGNGLSIYVF). At 64 to 72 (LQPYKKSTS) the chain is on the cytoplasmic side. The helical transmembrane segment at 73–93 (VNVFMLNLAISDLLFISTLPF) threads the bilayer. The Extracellular segment spans residues 94 to 123 (RADYYLRGSNWIFGDLACRIMSYSLYVNMY). A disulfide bridge connects residues Cys-111 and Cys-187. A helical membrane pass occupies residues 124–144 (SSIYFLTVLSVVRFLAMVHPF). Over 145-153 (RLLHVTSIR) the chain is Cytoplasmic. Residues 154–174 (SAWILCGIIWILIMASSIMLL) traverse the membrane as a helical segment. The Extracellular portion of the chain corresponds to 175 to 204 (DSGSEQNGSVTSCLELNLYKIAKLQTMNYI). An N-linked (GlcNAc...) asparagine glycan is attached at Asn-181. A helical transmembrane segment spans residues 205–225 (ALVVGCLLPFFTLSICYLLII). Residues 226 to 245 (RVLLKVEVPESGLRVSHRKA) are Cytoplasmic-facing. Residues 246–266 (LTTIIITLIIFFLCFLPYHTL) form a helical membrane-spanning segment. The Extracellular segment spans residues 267-286 (RTVHLTTWKVGLCKDRLHKA). Residues 287 to 307 (LVITLALAAANACFNPLLYYF) traverse the membrane as a helical segment. Topologically, residues 308–346 (AGENFKDRLKSALRKGHPQKAKTKCVFPVSVWLRKETRV) are cytoplasmic.

It belongs to the G-protein coupled receptor 1 family. As to expression, widely expressed, with highest levels in the heart, placenta, spleen, peripheral blood leukocytes and adrenal gland. In lung, expressed in the interstitial macrophages, and slightly in smooth muscle cells.

Its subcellular location is the cell membrane. In terms of biological role, receptor for cysteinyl leukotrienes. The response is mediated via a G-protein that activates a phosphatidylinositol-calcium second messenger system. Stimulation by BAY u9773, a partial agonist, induces specific contractions of pulmonary veins and might also have an indirect role in the relaxation of the pulmonary vascular endothelium. The rank order of affinities for the leukotrienes is LTC4 = LTD4 &gt;&gt; LTE4. This is Cysteinyl leukotriene receptor 2 (CYSLTR2) from Homo sapiens (Human).